Consider the following 1219-residue polypeptide: N-acetylglucosamine-1-phosphotransferase subunits alpha/beta (1219 aa).

A helical transmembrane segment spans residues 27–47 (LCFGGLVLMIVSAFQFGEVVV). 5 N-linked (GlcNAc...) asparagine glycosylation sites follow: Asn-88, Asn-119, Asn-153, Asn-292, and Asn-381. Disulfide bonds link Cys-443–Cys-466, Cys-457–Cys-473, Cys-508–Cys-531, and Cys-522–Cys-538. LNR repeat units lie at residues 443–478 (CAEG…GSSR) and 508–538 (CNQG…VGDC). Ca(2+) is bound at residue Asp-454. N-linked (GlcNAc...) asparagine glycosylation is present at Asn-462. Positions 469, 472, 519, 534, and 537 each coordinate Ca(2+). N-linked (GlcNAc...) asparagine glycans are attached at residues Asn-554, Asn-610, Asn-617, Asn-645, Asn-696, Asn-726, Asn-823, and Asn-974. Residues 640 to 666 (ELPKSNTSTPVRDKEEEPKPTVATPEP) form a disordered region. Residues 696 to 804 (NETLLPDEVK…DDVTTKAQSR (109 aa)) form the DMAP1-binding domain. The EF-hand domain occupies 970–1005 (VQQLNISEVFDEIDTDHSGVLSDREIRTLATRIHEL). 4 residues coordinate Ca(2+): Asp-983, Asp-985, Ser-987, and Glu-994. Residues Asn-1021, Asn-1029, and Asn-1094 are each glycosylated (N-linked (GlcNAc...) asparagine). The helical transmembrane segment at 1180 to 1200 (VLVTLVVFTVMSFFAEQLVML) threads the bilayer.

It belongs to the stealth family. As to quaternary structure, hexamer of two alpha, two beta and two gamma (GNPTG) subunits; disulfide-linked. The alpha and/or the beta subunits of the enzyme constitute the catalytic subunits. In terms of processing, the alpha- and beta-subunits are generated by a proteolytic cleavage by mbtps1 protease at the Gln-893-Asp-894 bond.

The protein localises to the golgi apparatus membrane. It catalyses the reaction N(4)-[alpha-D-mannosyl-(1-&gt;2)-alpha-D-mannosyl-(glycan)]-L-asparaginyl-[protein] + UDP-N-acetyl-alpha-D-glucosamine = N(4)-[6-(N-acetyl-alpha-D-glucosaminyl-1-phospho)-alpha-D-mannosyl-(1-&gt;2)-alpha-D-mannosyl-(glycan)]-L-asparaginyl-[protein] + UMP + H(+). In terms of biological role, catalyzes the formation of mannose 6-phosphate (M6P) markers on high mannose type oligosaccharides in the Golgi apparatus. M6P residues are required to bind to the M6P receptors (MPR), which mediate the vesicular transport of lysosomal enzymes to the endosomal/prelysosomal compartment. The chain is N-acetylglucosamine-1-phosphotransferase subunits alpha/beta (gnptab) from Danio rerio (Zebrafish).